The chain runs to 372 residues: Glutamate 5-kinase (372 aa).

Lys6 lines the ATP pocket. Positions 46, 133, and 145 each coordinate substrate. ATP contacts are provided by residues 165–166 (TD) and 207–213 (TGGMYTK). One can recognise a PUA domain in the interval 272–350 (NGFLFVDEGA…HDIESILGYK (79 aa)).

Belongs to the glutamate 5-kinase family.

The protein localises to the cytoplasm. The enzyme catalyses L-glutamate + ATP = L-glutamyl 5-phosphate + ADP. It functions in the pathway amino-acid biosynthesis; L-proline biosynthesis; L-glutamate 5-semialdehyde from L-glutamate: step 1/2. Its function is as follows. Catalyzes the transfer of a phosphate group to glutamate to form L-glutamate 5-phosphate. This Caldanaerobacter subterraneus subsp. tengcongensis (strain DSM 15242 / JCM 11007 / NBRC 100824 / MB4) (Thermoanaerobacter tengcongensis) protein is Glutamate 5-kinase.